A 554-amino-acid chain; its full sequence is 2-succinyl-5-enolpyruvyl-6-hydroxy-3-cyclohexene-1-carboxylate synthase (554 aa).

The protein belongs to the TPP enzyme family. MenD subfamily. Homodimer. Mg(2+) is required as a cofactor. Requires Mn(2+) as cofactor. It depends on thiamine diphosphate as a cofactor.

It carries out the reaction isochorismate + 2-oxoglutarate + H(+) = 5-enolpyruvoyl-6-hydroxy-2-succinyl-cyclohex-3-ene-1-carboxylate + CO2. Its pathway is quinol/quinone metabolism; 1,4-dihydroxy-2-naphthoate biosynthesis; 1,4-dihydroxy-2-naphthoate from chorismate: step 2/7. It functions in the pathway quinol/quinone metabolism; menaquinone biosynthesis. In terms of biological role, catalyzes the thiamine diphosphate-dependent decarboxylation of 2-oxoglutarate and the subsequent addition of the resulting succinic semialdehyde-thiamine pyrophosphate anion to isochorismate to yield 2-succinyl-5-enolpyruvyl-6-hydroxy-3-cyclohexene-1-carboxylate (SEPHCHC). The chain is 2-succinyl-5-enolpyruvyl-6-hydroxy-3-cyclohexene-1-carboxylate synthase from Flavobacterium johnsoniae (strain ATCC 17061 / DSM 2064 / JCM 8514 / BCRC 14874 / CCUG 350202 / NBRC 14942 / NCIMB 11054 / UW101) (Cytophaga johnsonae).